The chain runs to 142 residues: MTLTDSDKAAVVALWGKIAPQANAIGAEALERLFLSYPQTKTYFSHFDLSHGSADLANHGGKVVNALGEAAKHIDDLDAALSTLSDLHAYNLRVDPGNFKLLSHTIQVTLAIHFHKEFDAATQAAWDKFLAEVATVLTSKYR.

Residues 2–142 (TLTDSDKAAV…VATVLTSKYR (141 aa)) enclose the Globin domain. Histidine 59 contacts O2. Histidine 88 serves as a coordination point for heme b.

Belongs to the globin family. Heterotetramer of two alpha chains and two beta chains. As to expression, red blood cells.

This is a larval (tadpole) alpha-globin. The polypeptide is Hemoglobin subunit alpha-3 (hba3) (Xenopus laevis (African clawed frog)).